The primary structure comprises 251 residues: uncharacterized protein (251 aa).

Positions Lys3–Val118 constitute a Response regulatory domain. A 4-aspartylphosphate modification is found at Asp55. The 98-residue stretch at Asn152 to Leu249 folds into the HTH araC/xylS-type domain. DNA-binding regions (H-T-H motif) lie at residues Leu169–Val190 and His216–Leu239.

In terms of processing, phosphorylated by SE_0166.

Its subcellular location is the cytoplasm. Probable member of the two-component regulatory system SE_0166/SE_0165. This is an uncharacterized protein from Staphylococcus epidermidis (strain ATCC 12228 / FDA PCI 1200).